The sequence spans 35 residues: U1-theraphotoxin-Hs1f (35 aa).

Intrachain disulfides connect C3–C16, C7–C27, and C21–C32.

Belongs to the neurotoxin 12 (Hwtx-2) family. 02 (Hwtx-2) subfamily. As to expression, expressed by the venom gland.

The protein resides in the secreted. Blocks neuromuscular transmission. Acts cooperatively to potentiate the activity of huwentoxin-I. Paralyzes locusts and kills mice following intracerebroventricular injection. The sequence is that of U1-theraphotoxin-Hs1f from Cyriopagopus schmidti (Chinese bird spider).